The following is a 236-amino-acid chain: 2-C-methyl-D-erythritol 4-phosphate cytidylyltransferase (236 aa).

It belongs to the IspD/TarI cytidylyltransferase family. IspD subfamily. Homodimer.

The enzyme catalyses 2-C-methyl-D-erythritol 4-phosphate + CTP + H(+) = 4-CDP-2-C-methyl-D-erythritol + diphosphate. It functions in the pathway isoprenoid biosynthesis; isopentenyl diphosphate biosynthesis via DXP pathway; isopentenyl diphosphate from 1-deoxy-D-xylulose 5-phosphate: step 2/6. Its function is as follows. Catalyzes the formation of 4-diphosphocytidyl-2-C-methyl-D-erythritol from CTP and 2-C-methyl-D-erythritol 4-phosphate (MEP). The sequence is that of 2-C-methyl-D-erythritol 4-phosphate cytidylyltransferase from Enterobacter sp. (strain 638).